Here is a 458-residue protein sequence, read N- to C-terminus: UDP-N-acetylmuramate--L-alanine ligase (458 aa).

Position 112–118 (112–118 (GMHGKTT)) interacts with ATP.

The protein belongs to the MurCDEF family.

Its subcellular location is the cytoplasm. The enzyme catalyses UDP-N-acetyl-alpha-D-muramate + L-alanine + ATP = UDP-N-acetyl-alpha-D-muramoyl-L-alanine + ADP + phosphate + H(+). Its pathway is cell wall biogenesis; peptidoglycan biosynthesis. Cell wall formation. The chain is UDP-N-acetylmuramate--L-alanine ligase from Acidobacterium capsulatum (strain ATCC 51196 / DSM 11244 / BCRC 80197 / JCM 7670 / NBRC 15755 / NCIMB 13165 / 161).